Here is an 867-residue protein sequence, read N- to C-terminus: Alanine--tRNA ligase (867 aa).

The Zn(2+) site is built by histidine 554, histidine 558, cysteine 656, and histidine 660.

It belongs to the class-II aminoacyl-tRNA synthetase family. Zn(2+) is required as a cofactor.

It is found in the cytoplasm. The catalysed reaction is tRNA(Ala) + L-alanine + ATP = L-alanyl-tRNA(Ala) + AMP + diphosphate. Its function is as follows. Catalyzes the attachment of alanine to tRNA(Ala) in a two-step reaction: alanine is first activated by ATP to form Ala-AMP and then transferred to the acceptor end of tRNA(Ala). Also edits incorrectly charged Ser-tRNA(Ala) and Gly-tRNA(Ala) via its editing domain. This Methylococcus capsulatus (strain ATCC 33009 / NCIMB 11132 / Bath) protein is Alanine--tRNA ligase.